Here is an 88-residue protein sequence, read N- to C-terminus: MANSAQAKKRARQNVKARKHNASLRSMVRTYIKRTLSAIAGGDYAVATEAYKKAVPVIDRMADKGIIHKNKAARHKSRLNAQVKALAN.

Residues 1-21 (MANSAQAKKRARQNVKARKHN) are disordered. The segment covering 7–21 (AKKRARQNVKARKHN) has biased composition (basic residues).

Belongs to the bacterial ribosomal protein bS20 family.

Binds directly to 16S ribosomal RNA. This Acinetobacter baumannii (strain AB307-0294) protein is Small ribosomal subunit protein bS20.